Here is a 313-residue protein sequence, read N- to C-terminus: 4-hydroxy-3-methylbut-2-enyl diphosphate reductase (313 aa).

Position 12 (Cys12) interacts with [4Fe-4S] cluster. (2E)-4-hydroxy-3-methylbut-2-enyl diphosphate contacts are provided by His41 and His74. His41 and His74 together coordinate dimethylallyl diphosphate. 2 residues coordinate isopentenyl diphosphate: His41 and His74. Cys96 is a binding site for [4Fe-4S] cluster. His124 provides a ligand contact to (2E)-4-hydroxy-3-methylbut-2-enyl diphosphate. His124 is a dimethylallyl diphosphate binding site. His124 contacts isopentenyl diphosphate. Glu126 acts as the Proton donor in catalysis. A (2E)-4-hydroxy-3-methylbut-2-enyl diphosphate-binding site is contributed by Thr167. Position 197 (Cys197) interacts with [4Fe-4S] cluster. Residues Ser225, Ser226, Asn227, and Ser269 each coordinate (2E)-4-hydroxy-3-methylbut-2-enyl diphosphate. 4 residues coordinate dimethylallyl diphosphate: Ser225, Ser226, Asn227, and Ser269. Isopentenyl diphosphate-binding residues include Ser225, Ser226, Asn227, and Ser269.

The protein belongs to the IspH family. It depends on [4Fe-4S] cluster as a cofactor.

It carries out the reaction isopentenyl diphosphate + 2 oxidized [2Fe-2S]-[ferredoxin] + H2O = (2E)-4-hydroxy-3-methylbut-2-enyl diphosphate + 2 reduced [2Fe-2S]-[ferredoxin] + 2 H(+). It catalyses the reaction dimethylallyl diphosphate + 2 oxidized [2Fe-2S]-[ferredoxin] + H2O = (2E)-4-hydroxy-3-methylbut-2-enyl diphosphate + 2 reduced [2Fe-2S]-[ferredoxin] + 2 H(+). Its pathway is isoprenoid biosynthesis; dimethylallyl diphosphate biosynthesis; dimethylallyl diphosphate from (2E)-4-hydroxy-3-methylbutenyl diphosphate: step 1/1. The protein operates within isoprenoid biosynthesis; isopentenyl diphosphate biosynthesis via DXP pathway; isopentenyl diphosphate from 1-deoxy-D-xylulose 5-phosphate: step 6/6. Its function is as follows. Catalyzes the conversion of 1-hydroxy-2-methyl-2-(E)-butenyl 4-diphosphate (HMBPP) into a mixture of isopentenyl diphosphate (IPP) and dimethylallyl diphosphate (DMAPP). Acts in the terminal step of the DOXP/MEP pathway for isoprenoid precursor biosynthesis. The protein is 4-hydroxy-3-methylbut-2-enyl diphosphate reductase of Baumannia cicadellinicola subsp. Homalodisca coagulata.